A 247-amino-acid polypeptide reads, in one-letter code: Mast cell protease 8 (247 aa).

Residues 1–19 (MFLLLVLLVAALPVNAEGG) form the signal peptide. Residue Glu-20 is a propeptide, activation peptide. The Peptidase S1 domain occupies 21–242 (IIWGTESKPH…FMPWIRKTMK (222 aa)). Asn-41 is a glycosylation site (N-linked (GlcNAc...) asparagine). A disulfide bridge connects residues Cys-49 and Cys-65. Residue His-64 is the Charge relay system of the active site. N-linked (GlcNAc...) asparagine glycans are attached at residues Asn-71 and Asn-101. The Charge relay system role is filled by Asp-107. Intrachain disulfides connect Cys-141–Cys-206 and Cys-171–Cys-185. 2 N-linked (GlcNAc...) asparagine glycosylation sites follow: Asn-151 and Asn-179. Residue Ser-200 is the Charge relay system of the active site.

It belongs to the peptidase S1 family. Granzyme subfamily.

The protein localises to the secreted. The protein resides in the cytoplasmic granule. The protein is Mast cell protease 8 (Mcpt8) of Mus musculus (Mouse).